A 190-amino-acid polypeptide reads, in one-letter code: RING finger protein 227 (190 aa).

The RING-type zinc finger occupies 18–81; it reads CNICYRPFNL…RRVVTCPFCR (64 aa). A disordered region spans residues 111–145; sequence KCERDEAGNPAKESSDADGEAEEEGESEKGAGPRS. Acidic residues predominate over residues 126–136; it reads DADGEAEEEGE.

The polypeptide is RING finger protein 227 (Homo sapiens (Human)).